The following is a 27-amino-acid chain: Bombinin-like peptide 2 (27 aa).

Asparagine amide is present on Asn27.

It belongs to the bombinin family. Expressed by the skin glands.

The protein localises to the secreted. In terms of biological role, has antimicrobial activity, but no hemolytic activity. Preference on killing Gram-negative non-enteric bacteria. The sequence is that of Bombinin-like peptide 2 from Bombina orientalis (Oriental fire-bellied toad).